A 264-amino-acid chain; its full sequence is uncharacterized protein (264 aa).

Positions methionine 1–serine 22 are cleaved as a signal peptide. Cysteine 23 carries N-palmitoyl cysteine lipidation. Cysteine 23 carries the S-diacylglycerol cysteine lipid modification.

It belongs to the staphylococcal tandem lipoprotein family.

The protein resides in the cell membrane. This is an uncharacterized protein from Staphylococcus aureus (strain MRSA252).